Reading from the N-terminus, the 201-residue chain is Natural cytotoxicity triggering receptor 3 (201 aa).

The first 18 residues, 1-18 (MAWMLLLILIMVYPGSCA), serve as a signal peptide directing secretion. In terms of domain architecture, Ig-like spans 19 to 126 (LWVSQPPEIR…VGTGNGTRLV (108 aa)). The Extracellular portion of the chain corresponds to 19–133 (LWVSQPPEIR…RLVVEKEYPQ (115 aa)). Cys39 and Cys108 are disulfide-bonded. 2 N-linked (GlcNAc...) asparagine glycosylation sites follow: Asn42 and Asn121. Residues 134–154 (LGAGTVLLLRAGFYAVSFLSV) traverse the membrane as a helical segment. Residues 155 to 201 (AMGSTLYYQGKCLTWKGPRRQLPAVVPGPLPPPCGSSAHLLPPVPGG) are Cytoplasmic-facing.

The protein belongs to the natural cytotoxicity receptor (NCR) family. In terms of assembly, homodimer in the unliganted form. Interacts with CD3Z. Interacts with and is activated by binding to NCR3LG1. Interacts with and is activated by binding to BAG6. Interacts with and is inhibited by binding to LGALS3.

The protein localises to the cell membrane. Its function is as follows. Cell membrane receptor of natural killer/NK cells that is activated by binding of extracellular ligands including BAG6 and NCR3LG1. Stimulates NK cells cytotoxicity toward neighboring cells producing these ligands. It controls, for instance, NK cells cytotoxicity against tumor cells. Engagement of NCR3 by BAG6 also promotes myeloid dendritic cells (DC) maturation, both through killing DCs that did not acquire a mature phenotype, and inducing the release by NK cells of TNFA and IFNG that promote DC maturation. This is Natural cytotoxicity triggering receptor 3 (NCR3) from Macaca mulatta (Rhesus macaque).